The primary structure comprises 828 residues: Hapless 2 (828 aa).

The signal sequence occupies residues 1–32 (MKNKLINLRSKHIYKLIIIIFFCIILKYYKWC). The Extracellular portion of the chain corresponds to 33–680 (DFKNKVFFIQ…INTVKTLIGK (648 aa)). Cys-53 and Cys-62 are oxidised to a cystine. N-linked (GlcNAc...) asparagine glycosylation occurs at Asn-74. 4 cysteine pairs are disulfide-bonded: Cys-142/Cys-209, Cys-170/Cys-381, Cys-172/Cys-191, and Cys-363/Cys-388. The cd loop; involved in gamete fusion stretch occupies residues 174 to 191 (TYNYFKDDEFIKRAKLKC). 5 N-linked (GlcNAc...) asparagine glycosylation sites follow: Asn-233, Asn-250, Asn-264, Asn-293, and Asn-333. N-linked (GlcNAc...) asparagine glycans are attached at residues Asn-479, Asn-516, Asn-531, and Asn-539. Cys-546 and Cys-592 are oxidised to a cystine. Residues 681-701 (FAIIAILIILAPALIPLLPFF) traverse the membrane as a helical segment. Residues 702 to 828 (LNFFFLFIST…SGKSKIPPLR (127 aa)) lie on the Cytoplasmic side of the membrane. The tract at residues 773–828 (RKNKKKFNKNNISSNIKHKKGGKKVKQKEPNRNSNHTSHEYADTSPSGKSKIPPLR) is disordered. Residues 788-798 (IKHKKGGKKVK) are compositionally biased toward basic residues. The segment covering 799 to 814 (QKEPNRNSNHTSHEYA) has biased composition (basic and acidic residues).

The protein belongs to the HAP2/GCS1 family.

The protein resides in the cell membrane. In terms of biological role, during fertilization, required on male gametes for their fusion with female gametes, and for subsequent ookinete formation in the host. Thereby, required for mosquito-mediated transmission to other animals. Probably initiates the fusion of gamete cell membranes by inserting part of its extracellular domain into the cell membrane of a female gamete. This Plasmodium berghei (strain Anka) protein is Hapless 2.